A 152-amino-acid chain; its full sequence is Transcriptional repressor NrdR (152 aa).

The segment at 3-33 (CSICKKGETSVVDSRPTEDGTAIRRRRLCVC) is a zinc-finger region. The ATP-cone domain occupies 48–138 (IMVVKKNGRK…VYRNFREEKD (91 aa)).

Belongs to the NrdR family. It depends on Zn(2+) as a cofactor.

In terms of biological role, negatively regulates transcription of bacterial ribonucleotide reductase nrd genes and operons by binding to NrdR-boxes. The protein is Transcriptional repressor NrdR of Pelagibacter ubique (strain HTCC1062).